A 426-amino-acid polypeptide reads, in one-letter code: Serine--tRNA ligase (426 aa).

233 to 235 (TAE) provides a ligand contact to L-serine. 264-266 (RSE) is a binding site for ATP. Glu287 contacts L-serine. Position 351 to 354 (351 to 354 (EISS)) interacts with ATP. Ser387 lines the L-serine pocket.

It belongs to the class-II aminoacyl-tRNA synthetase family. Type-1 seryl-tRNA synthetase subfamily. In terms of assembly, homodimer. The tRNA molecule binds across the dimer.

The protein resides in the cytoplasm. The enzyme catalyses tRNA(Ser) + L-serine + ATP = L-seryl-tRNA(Ser) + AMP + diphosphate + H(+). It carries out the reaction tRNA(Sec) + L-serine + ATP = L-seryl-tRNA(Sec) + AMP + diphosphate + H(+). It functions in the pathway aminoacyl-tRNA biosynthesis; selenocysteinyl-tRNA(Sec) biosynthesis; L-seryl-tRNA(Sec) from L-serine and tRNA(Sec): step 1/1. Its function is as follows. Catalyzes the attachment of serine to tRNA(Ser). Is also able to aminoacylate tRNA(Sec) with serine, to form the misacylated tRNA L-seryl-tRNA(Sec), which will be further converted into selenocysteinyl-tRNA(Sec). The protein is Serine--tRNA ligase of Clostridium tetani (strain Massachusetts / E88).